Reading from the N-terminus, the 176-residue chain is Acireductone dioxygenase (176 aa).

Positions Met-1–Arg-21 are disordered. A compositionally biased stretch (basic and acidic residues) spans Lys-9–Gly-20. His-81, His-83, Glu-87, and His-126 together coordinate Fe(2+). Ni(2+) contacts are provided by His-81, His-83, Glu-87, and His-126.

Belongs to the acireductone dioxygenase (ARD) family. The cofactor is Fe(2+). Ni(2+) is required as a cofactor.

The protein resides in the cytoplasm. Its subcellular location is the nucleus. It catalyses the reaction 1,2-dihydroxy-5-(methylsulfanyl)pent-1-en-3-one + O2 = 4-methylsulfanyl-2-oxobutanoate + formate + 2 H(+). It carries out the reaction 1,2-dihydroxy-5-(methylsulfanyl)pent-1-en-3-one + O2 = 3-(methylsulfanyl)propanoate + CO + formate + 2 H(+). It participates in amino-acid biosynthesis; L-methionine biosynthesis via salvage pathway; L-methionine from S-methyl-5-thio-alpha-D-ribose 1-phosphate: step 5/6. Functionally, catalyzes 2 different reactions between oxygen and the acireductone 1,2-dihydroxy-3-keto-5-methylthiopentene (DHK-MTPene) depending upon the metal bound in the active site. Fe-containing acireductone dioxygenase (Fe-ARD) produces formate and 2-keto-4-methylthiobutyrate (KMTB), the alpha-ketoacid precursor of methionine in the methionine recycle pathway. Ni-containing acireductone dioxygenase (Ni-ARD) produces methylthiopropionate, carbon monoxide and formate, and does not lie on the methionine recycle pathway. The sequence is that of Acireductone dioxygenase (adi1) from Aspergillus fumigatus (strain ATCC MYA-4609 / CBS 101355 / FGSC A1100 / Af293) (Neosartorya fumigata).